We begin with the raw amino-acid sequence, 214 residues long: ATP-dependent Clp protease proteolytic subunit (214 aa).

The active-site Nucleophile is the S114. H139 is an active-site residue.

This sequence belongs to the peptidase S14 family. Fourteen ClpP subunits assemble into 2 heptameric rings which stack back to back to give a disk-like structure with a central cavity, resembling the structure of eukaryotic proteasomes.

The protein resides in the cytoplasm. The catalysed reaction is Hydrolysis of proteins to small peptides in the presence of ATP and magnesium. alpha-casein is the usual test substrate. In the absence of ATP, only oligopeptides shorter than five residues are hydrolyzed (such as succinyl-Leu-Tyr-|-NHMec, and Leu-Tyr-Leu-|-Tyr-Trp, in which cleavage of the -Tyr-|-Leu- and -Tyr-|-Trp bonds also occurs).. Cleaves peptides in various proteins in a process that requires ATP hydrolysis. Has a chymotrypsin-like activity. Plays a major role in the degradation of misfolded proteins. In Nitrosomonas europaea (strain ATCC 19718 / CIP 103999 / KCTC 2705 / NBRC 14298), this protein is ATP-dependent Clp protease proteolytic subunit.